A 148-amino-acid chain; its full sequence is uncharacterized protein (148 aa).

This sequence belongs to the serpin family. Poxviruses subfamily.

This is an uncharacterized protein from Fowlpox virus (strain NVSL) (FPV).